A 167-amino-acid chain; its full sequence is Large ribosomal subunit protein uL10 (167 aa).

Belongs to the universal ribosomal protein uL10 family. As to quaternary structure, part of the ribosomal stalk of the 50S ribosomal subunit. The N-terminus interacts with L11 and the large rRNA to form the base of the stalk. The C-terminus forms an elongated spine to which L12 dimers bind in a sequential fashion forming a multimeric L10(L12)X complex.

Forms part of the ribosomal stalk, playing a central role in the interaction of the ribosome with GTP-bound translation factors. The protein is Large ribosomal subunit protein uL10 of Chromohalobacter salexigens (strain ATCC BAA-138 / DSM 3043 / CIP 106854 / NCIMB 13768 / 1H11).